A 267-amino-acid chain; its full sequence is Integral membrane protein 2C (267 aa).

Phosphothreonine is present on Thr37. A helical; Signal-anchor for type II membrane protein transmembrane segment spans residues 55–75 (VGGVCYLSMGMVVLLMGLVFA). Residues 136–230 (FGGGDPADII…LCNGKDTYRL (95 aa)) enclose the BRICHOS domain. Cys163 and Cys222 are joined by a disulfide. An N-linked (GlcNAc...) asparagine glycan is attached at Asn169.

It belongs to the ITM2 family. As to quaternary structure, interacts with BACE1. Interacts with APP. Interacts with STMN2. In terms of processing, type I membrane-bound, as well as soluble, furin has a pre-eminent role in ITM2C proteolytic processing. PCSK7 and PCSK5 may also be involved although to a lesser extent. The soluble form of PCSK7 is incapable of processing ITM2C. Fails to undergo shedding by ADAM10 and intramembrane cleavage by SPPL2B. In terms of tissue distribution, high levels in the brain, specifically in the cerebral cortex, medulla, amygdala, hippocampus, thalamus, caudate nucleus, cerebellum, olfactory lobe and spinal cord. Very low levels in other organs.

Its subcellular location is the lysosome membrane. The protein localises to the cell membrane. Functionally, negative regulator of amyloid-beta peptide production. May inhibit the processing of APP by blocking its access to alpha- and beta-secretase. Binding to the beta-secretase-cleaved APP C-terminal fragment is negligible, suggesting that ITM2C is a poor gamma-secretase cleavage inhibitor. May play a role in TNF-induced cell death and neuronal differentiation. In Homo sapiens (Human), this protein is Integral membrane protein 2C (ITM2C).